A 480-amino-acid chain; its full sequence is Glutamyl-tRNA(Gln) amidotransferase subunit A (480 aa).

Active-site charge relay system residues include lysine 79 and serine 154. Positions 133–156 (NENSAYGPVRNPRDKSRVPGGSSG) are disordered. The Acyl-ester intermediate role is filled by serine 178.

The protein belongs to the amidase family. GatA subfamily. Heterotrimer of A, B and C subunits.

It catalyses the reaction L-glutamyl-tRNA(Gln) + L-glutamine + ATP + H2O = L-glutaminyl-tRNA(Gln) + L-glutamate + ADP + phosphate + H(+). Its function is as follows. Allows the formation of correctly charged Gln-tRNA(Gln) through the transamidation of misacylated Glu-tRNA(Gln) in organisms which lack glutaminyl-tRNA synthetase. The reaction takes place in the presence of glutamine and ATP through an activated gamma-phospho-Glu-tRNA(Gln). The sequence is that of Glutamyl-tRNA(Gln) amidotransferase subunit A from Koribacter versatilis (strain Ellin345).